We begin with the raw amino-acid sequence, 189 residues long: 3-isopropylmalate dehydratase small subunit (189 aa).

It belongs to the LeuD family. LeuD type 1 subfamily. In terms of assembly, heterodimer of LeuC and LeuD.

It catalyses the reaction (2R,3S)-3-isopropylmalate = (2S)-2-isopropylmalate. It functions in the pathway amino-acid biosynthesis; L-leucine biosynthesis; L-leucine from 3-methyl-2-oxobutanoate: step 2/4. In terms of biological role, catalyzes the isomerization between 2-isopropylmalate and 3-isopropylmalate, via the formation of 2-isopropylmaleate. In Francisella tularensis subsp. holarctica (strain FTNF002-00 / FTA), this protein is 3-isopropylmalate dehydratase small subunit.